The following is a 64-amino-acid chain: Weak toxin CM-9a (64 aa).

Cystine bridges form between C3-C24, C6-C11, C17-C41, C45-C56, and C57-C62.

The protein belongs to the three-finger toxin family. Ancestral subfamily. Orphan group II sub-subfamily. In terms of tissue distribution, expressed by the venom gland.

It is found in the secreted. Binds with low affinity to muscular (alpha-1-beta-1-delta-epsilon/CHRNA1-CHRNB1-CHRND-CHRNE) and very low affinity to neuronal (alpha-7/CHRNA7) nicotinic acetylcholine receptor (nAChR). This is Weak toxin CM-9a from Naja kaouthia (Monocled cobra).